Here is a 353-residue protein sequence, read N- to C-terminus: Thiamine-phosphate synthase (353 aa).

The tract at residues 1 to 128 (MESMPVAPST…ARTAAAVRYA (128 aa)) is unknown. The interval 129–353 (LYDHEVRILE…ASRQLLDLLT (225 aa)) is thiamine-phosphate synthase. 4-amino-2-methyl-5-(diphosphooxymethyl)pyrimidine-binding positions include 185 to 189 (QYRRK) and asparagine 217. 2 residues coordinate Mg(2+): aspartate 218 and aspartate 237. Serine 256 is a binding site for 4-amino-2-methyl-5-(diphosphooxymethyl)pyrimidine. 282–284 (TAT) contacts 2-[(2R,5Z)-2-carboxy-4-methylthiazol-5(2H)-ylidene]ethyl phosphate. Lysine 285 contributes to the 4-amino-2-methyl-5-(diphosphooxymethyl)pyrimidine binding site. 2-[(2R,5Z)-2-carboxy-4-methylthiazol-5(2H)-ylidene]ethyl phosphate is bound by residues glycine 312 and 332 to 333 (VS).

It belongs to the thiamine-phosphate synthase family. It depends on Mg(2+) as a cofactor.

It catalyses the reaction 2-[(2R,5Z)-2-carboxy-4-methylthiazol-5(2H)-ylidene]ethyl phosphate + 4-amino-2-methyl-5-(diphosphooxymethyl)pyrimidine + 2 H(+) = thiamine phosphate + CO2 + diphosphate. The catalysed reaction is 2-(2-carboxy-4-methylthiazol-5-yl)ethyl phosphate + 4-amino-2-methyl-5-(diphosphooxymethyl)pyrimidine + 2 H(+) = thiamine phosphate + CO2 + diphosphate. It carries out the reaction 4-methyl-5-(2-phosphooxyethyl)-thiazole + 4-amino-2-methyl-5-(diphosphooxymethyl)pyrimidine + H(+) = thiamine phosphate + diphosphate. It functions in the pathway cofactor biosynthesis; thiamine diphosphate biosynthesis; thiamine phosphate from 4-amino-2-methyl-5-diphosphomethylpyrimidine and 4-methyl-5-(2-phosphoethyl)-thiazole: step 1/1. Condenses 4-methyl-5-(beta-hydroxyethyl)thiazole monophosphate (THZ-P) and 2-methyl-4-amino-5-hydroxymethyl pyrimidine pyrophosphate (HMP-PP) to form thiamine monophosphate (TMP). The protein is Thiamine-phosphate synthase of Synechococcus sp. (strain WH7803).